The chain runs to 52 residues: Venom peptide 4a (52 aa).

The signal sequence occupies residues 1 to 23 (MRSAILLVIVAIVAILGFLGVNA). AXPX repeat units lie at residues 23-26 (AEPL), 31-34 (AEPN), and 39-42 (AAPL). The propeptide occupies 24-41 (EPLPSPLAEPNPHAKAAP). Alanine 51 is modified (alanine amide).

Expressed by the venom gland.

The protein resides in the secreted. This chain is Venom peptide 4a, found in Eumenes pomiformis (Potter wasp).